Here is a 421-residue protein sequence, read N- to C-terminus: UDP-N-acetylglucosamine 1-carboxyvinyltransferase (421 aa).

Phosphoenolpyruvate is bound at residue 22-23 (KN). Arginine 93 provides a ligand contact to UDP-N-acetyl-alpha-D-glucosamine. Cysteine 117 acts as the Proton donor in catalysis. Residue cysteine 117 is modified to 2-(S-cysteinyl)pyruvic acid O-phosphothioketal. UDP-N-acetyl-alpha-D-glucosamine is bound by residues 122-126 (RPVDL), aspartate 308, and leucine 330.

The protein belongs to the EPSP synthase family. MurA subfamily.

It is found in the cytoplasm. It catalyses the reaction phosphoenolpyruvate + UDP-N-acetyl-alpha-D-glucosamine = UDP-N-acetyl-3-O-(1-carboxyvinyl)-alpha-D-glucosamine + phosphate. Its pathway is cell wall biogenesis; peptidoglycan biosynthesis. In terms of biological role, cell wall formation. Adds enolpyruvyl to UDP-N-acetylglucosamine. The polypeptide is UDP-N-acetylglucosamine 1-carboxyvinyltransferase (Helicobacter hepaticus (strain ATCC 51449 / 3B1)).